We begin with the raw amino-acid sequence, 349 residues long: uncharacterized protein (349 aa).

A helical membrane pass occupies residues 16–36; that stretch reads LVITIISTGLIFGMTLVLTGL. The tract at residues 111 to 139 is disordered; sequence FGAPEHGPGMPRVSEGRSPSKPDEVAASS. Positions 124 to 134 are enriched in basic and acidic residues; it reads SEGRSPSKPDE. 3 helical membrane-spanning segments follow: residues 231 to 251, 284 to 304, and 307 to 327; these read ISIVAVLLWIVAVLIVGSVVY, VIALLAAVVGVVLAQVLAPLF, and IVAVPVGAYLALPVAAIVIGL.

It belongs to the ABC-4 integral membrane protein family. As to quaternary structure, the complex is composed of two ATP-binding proteins (MT0079), two transmembrane proteins (MT0078) and a solute-binding protein.

The protein localises to the cell membrane. Its function is as follows. Probably part of an ABC transporter complex. Probably responsible for the translocation of the substrate across the membrane. This is an uncharacterized protein from Mycobacterium tuberculosis (strain CDC 1551 / Oshkosh).